The sequence spans 653 residues: Fidgetin-like protein 2 (653 aa).

3 disordered regions span residues 1 to 36, 86 to 129, and 216 to 240; these read MHWT…ELPP, ASFL…SGAL, and YGAL…APTP. Over residues 10–27 the composition is skewed to polar residues; the sequence is PLNQWPEQHLDVSSTTPS. A compositionally biased stretch (pro residues) spans 97–107; that stretch reads EPWPGPEPPYP. Positions 119–129 are enriched in gly residues; it reads KSGGGGGSGAL. Over residues 219 to 240 the composition is skewed to pro residues; that stretch reads LPPPPGPPPAPYLTPGLPAPTP. ATP is bound by residues Ala-395 and 435–440; that span reads GAGKAL.

The protein belongs to the AAA ATPase family. Mg(2+) is required as a cofactor.

The protein localises to the cytoplasm. It is found in the cell cortex. The catalysed reaction is ATP + H2O = ADP + phosphate + H(+). Functionally, microtubule-severing enzyme that negatively regulates cell migration and wound healing. In migrating cells, targets dynamic microtubules (MTs) at the leading edge and severs them, thereby suppressing motility. Microtubule severing releases ARHGEF2 which activates RHOA, which in turn regulates focal ahesion turnover via focal adhesion kinase, as opposed to F-actin polymerization, to suppress cell motility. Negative regulator of axon regeneration that suppresses axonal growth by selectively severing dynamic MTs in the distal axon shaft and growth cone. Contributes to proper cell branching during endothelial and neuronal development. This is Fidgetin-like protein 2 from Homo sapiens (Human).